We begin with the raw amino-acid sequence, 542 residues long: CTP synthase (542 aa).

The tract at residues 1–265 (MARYIFITGG…DQEVLSAFGI (265 aa)) is amidoligase domain. Ser-13 contacts CTP. Position 13 (Ser-13) interacts with UTP. An ATP-binding site is contributed by 14–19 (SLGKGL). Tyr-54 serves as a coordination point for L-glutamine. Asp-71 lines the ATP pocket. Asp-71 and Glu-139 together coordinate Mg(2+). CTP contacts are provided by residues 146-148 (DIE), 186-191 (KTKPTQ), and Lys-222. UTP is bound by residues 186–191 (KTKPTQ) and Lys-222. 238-240 (RDV) serves as a coordination point for ATP. The region spanning 291 to 541 (TIAIVGKYTG…IAAAMEQSRL (251 aa)) is the Glutamine amidotransferase type-1 domain. Gly-353 is a binding site for L-glutamine. Cys-380 (nucleophile; for glutamine hydrolysis) is an active-site residue. L-glutamine-binding positions include 381 to 384 (FGMQ), Glu-404, and Arg-469. Active-site residues include His-514 and Glu-516.

It belongs to the CTP synthase family. Homotetramer.

It carries out the reaction UTP + L-glutamine + ATP + H2O = CTP + L-glutamate + ADP + phosphate + 2 H(+). The catalysed reaction is L-glutamine + H2O = L-glutamate + NH4(+). The enzyme catalyses UTP + NH4(+) + ATP = CTP + ADP + phosphate + 2 H(+). It participates in pyrimidine metabolism; CTP biosynthesis via de novo pathway; CTP from UDP: step 2/2. With respect to regulation, allosterically activated by GTP, when glutamine is the substrate; GTP has no effect on the reaction when ammonia is the substrate. The allosteric effector GTP functions by stabilizing the protein conformation that binds the tetrahedral intermediate(s) formed during glutamine hydrolysis. Inhibited by the product CTP, via allosteric rather than competitive inhibition. In terms of biological role, catalyzes the ATP-dependent amination of UTP to CTP with either L-glutamine or ammonia as the source of nitrogen. Regulates intracellular CTP levels through interactions with the four ribonucleotide triphosphates. In Beijerinckia indica subsp. indica (strain ATCC 9039 / DSM 1715 / NCIMB 8712), this protein is CTP synthase.